Consider the following 75-residue polypeptide: uncharacterized protein (75 aa).

Residues 4–26 traverse the membrane as a helical segment; it reads PSLLFLGFSGVLAFGEVGWVGVY.

It localises to the membrane. This is an uncharacterized protein from Treponema pallidum (strain Nichols).